The following is a 302-amino-acid chain: Sulfate adenylyltransferase subunit 2 2 (302 aa).

Belongs to the PAPS reductase family. CysD subfamily. Heterodimer composed of CysD, the smaller subunit, and CysN.

The enzyme catalyses sulfate + ATP + H(+) = adenosine 5'-phosphosulfate + diphosphate. It functions in the pathway sulfur metabolism; hydrogen sulfide biosynthesis; sulfite from sulfate: step 1/3. In terms of biological role, with CysN forms the ATP sulfurylase (ATPS) that catalyzes the adenylation of sulfate producing adenosine 5'-phosphosulfate (APS) and diphosphate, the first enzymatic step in sulfur assimilation pathway. APS synthesis involves the formation of a high-energy phosphoric-sulfuric acid anhydride bond driven by GTP hydrolysis by CysN coupled to ATP hydrolysis by CysD. The chain is Sulfate adenylyltransferase subunit 2 2 from Alkalilimnicola ehrlichii (strain ATCC BAA-1101 / DSM 17681 / MLHE-1).